The following is a 713-amino-acid chain: Cyclomaltodextrin glucanotransferase (713 aa).

The first 27 residues, 1 to 27, serve as a signal peptide directing secretion; the sequence is MKKFLKSTAALALGLSLTFGLFSPAQA. The segment at 28-165 is A1; that stretch reads APDTSVSNKQ…NIKVIIDFAP (138 aa). 4 residues coordinate Ca(2+): D54, N56, N59, and N60. The cysteines at positions 70 and 77 are disulfide-linked. Residues G78 and D80 each coordinate Ca(2+). 127 to 128 serves as a coordination point for substrate; sequence YW. N166 serves as a coordination point for Ca(2+). The tract at residues 166 to 229 is b; sequence NHTSPASSDQ…NLYDLADLNH (64 aa). Substrate is bound by residues H167 and 172-174; that span reads SSD. Position 217 (I217) interacts with Ca(2+). 220–223 lines the substrate pocket; sequence NLYD. A Ca(2+)-binding site is contributed by D226. The segment at 230–433 is A2; the sequence is NNSTVDVYLK…LRKCNPAIAY (204 aa). Position 254 (R254) interacts with substrate. The Nucleophile role is filled by D256. Residue 259–260 coordinates substrate; that stretch reads KH. Residue H260 participates in Ca(2+) binding. E284 functions as the Proton donor in the catalytic mechanism. Residue A342 coordinates Ca(2+). Positions 354, 398, and 402 each coordinate substrate. Residues 434–522 are c; the sequence is GSTQERWINN…GTAVWQYTAA (89 aa). The interval 523 to 609 is d; sequence TATPTIGHVG…SNVYDNFEVL (87 aa). The IPT/TIG domain occupies 526 to 607; sequence PTIGHVGPMM…TASNVYDNFE (82 aa). D604 contacts Ca(2+). The region spanning 608–713 is the CBM20 domain; the sequence is VLSGDQVSVR…TATINVNWQP (106 aa). Positions 610 to 713 are e; that stretch reads SGDQVSVRFV…TATINVNWQP (104 aa).

This sequence belongs to the glycosyl hydrolase 13 family. As to quaternary structure, monomer. Requires Ca(2+) as cofactor.

Its subcellular location is the secreted. It catalyses the reaction Cyclizes part of a (1-&gt;4)-alpha-D-glucan chain by formation of a (1-&gt;4)-alpha-D-glucosidic bond.. The chain is Cyclomaltodextrin glucanotransferase (cgt) from Niallia circulans (Bacillus circulans).